The chain runs to 377 residues: Mitochondrial pyrimidine nucleotide transporter RIM2 (377 aa).

3 Solcar repeats span residues 50-163 (VKPW…TKDM), 173-262 (ETPM…MKRL), and 286-375 (KEWC…VIRL). 6 helical membrane passes run 53 to 73 (WVHFVAGGIGGMAGAVVTCPF), 131 to 151 (GFRSLFKGLGPNLVGVIPARS), 179 to 199 (LMAAATAGWATATATNPIWLI), 238 to 258 (GLSASYLGSVEGILQWLLYEQ), 286 to 306 (KEWCQRSGSAGLAKFVASIAT), and 347 to 368 (MYSGLTPHLMRTVPNSIIMFGT).

The protein belongs to the mitochondrial carrier (TC 2.A.29) family.

Its subcellular location is the mitochondrion inner membrane. It catalyses the reaction 5-methyl-UTP(out) + UTP(in) = 5-methyl-UTP(in) + UTP(out). Its function is as follows. Mitochondrial transporter that imports/exports pyrimidine nucleotides into and from mitochondria. Selectively transports uridine, thymidine, and cytosine (deoxy)nucleoside di- and triphosphates by an antiport mechanism. Also transports, with lower efficiency, uridine, thymidine, and cytosine (deoxy)nucleoside monophosphates as well as guanosine (deoxy)nucleoside di- and triphosphate. May import (deoxy)nucleoside triphosphates in exchange for intramitochondrial (deoxy)nucleoside monophosphates, thus providing precursors necessary for de novo synthesis of mitochondrial DNA and RNA while exporting products of their catabolism. Mediates the transport of iron and other divalent metal ions like copper and zinc across the mitochondrial inner membrane in a pyrimidine nucleotide-dependent fashion. Catalyzes the co-import of pyrimidine nucleotides and divalent metal ions including ferrous iron. Participates in mitochondrial genome maintenance, regulation of mitochondrial membrane potential and mitochondrial respiration. This chain is Mitochondrial pyrimidine nucleotide transporter RIM2 (RIM2), found in Saccharomyces cerevisiae (strain ATCC 204508 / S288c) (Baker's yeast).